A 283-amino-acid chain; its full sequence is ACT domain-containing protein DS12, chloroplastic (283 aa).

The transit peptide at 1–56 directs the protein to the chloroplast; the sequence is MAEMAVTAALRPCSGVSPAVSGTSHRRRRPAAWRALAPPPPHAGLRLSSPAVRVPR. The segment at 14–78 is disordered; it reads SGVSPAVSGT…SNTDTVPTPK (65 aa). A compositionally biased stretch (low complexity) spans 48–63; it reads SSPAVRVPRAASSAAV. ACT domains are found at residues 91 to 171 and 206 to 276; these read IVEI…ASSQ and LLVV…LRRP.

Its subcellular location is the plastid. The protein localises to the chloroplast. In Oryza sativa subsp. indica (Rice), this protein is ACT domain-containing protein DS12, chloroplastic.